The chain runs to 78 residues: Large ribosomal subunit protein bL31 (78 aa).

It belongs to the bacterial ribosomal protein bL31 family. Type A subfamily. As to quaternary structure, part of the 50S ribosomal subunit.

Its function is as follows. Binds the 23S rRNA. In Rickettsia felis (strain ATCC VR-1525 / URRWXCal2) (Rickettsia azadi), this protein is Large ribosomal subunit protein bL31 (rpmE).